The sequence spans 118 residues: Small ribosomal subunit protein uS13 (118 aa).

The interval 93-118 is disordered; the sequence is KGLPVRGQRTKTNARTRKGPRKPIRK.

This sequence belongs to the universal ribosomal protein uS13 family. As to quaternary structure, part of the 30S ribosomal subunit. Forms a loose heterodimer with protein S19. Forms two bridges to the 50S subunit in the 70S ribosome.

In terms of biological role, located at the top of the head of the 30S subunit, it contacts several helices of the 16S rRNA. In the 70S ribosome it contacts the 23S rRNA (bridge B1a) and protein L5 of the 50S subunit (bridge B1b), connecting the 2 subunits; these bridges are implicated in subunit movement. Contacts the tRNAs in the A and P-sites. The protein is Small ribosomal subunit protein uS13 of Ectopseudomonas mendocina (strain ymp) (Pseudomonas mendocina).